A 373-amino-acid chain; its full sequence is MARWICFEDIELKKIRVVVVDDSALVRSLLAEIINRQKDMECVGTANDPLIAREMIRELNPDVLTLDIEMPRMDGIDFLGRLMRLRPMPVVMVSTLTERGAEITMKALELGAIDFVAKPRIGVASGLTELSDQIVEKVRIAATAHVRRAPAVPAAATPAVGGAVGGHAPVASIGRVSTEKLICIGASTGGTEAIKEILTRLPADSPGIVITQHMPPGFTTSFAARLNSLCQIAVQEAVNGERILPGHAYIAPGGKQFRVSRSGANYVALVEDGELVNRHKPSVEVLFKSVASVVGRNAYGVMLTGMGNDGAKAMREMKDAGSYNFVQDEASCIVFGMPREAILHGAADEVLPLTAIAPALIAKLSSATDRYRV.

Positions 16 to 133 (RVVVVDDSAL…ASGLTELSDQ (118 aa)) constitute a Response regulatory domain. At aspartate 67 the chain carries 4-aspartylphosphate. The CheB-type methylesterase domain occupies 175-367 (RVSTEKLICI…PALIAKLSSA (193 aa)). Active-site residues include serine 187, histidine 213, and aspartate 309.

It belongs to the CheB family. In terms of processing, phosphorylated by CheA. Phosphorylation of the N-terminal regulatory domain activates the methylesterase activity.

The protein localises to the cytoplasm. The enzyme catalyses [protein]-L-glutamate 5-O-methyl ester + H2O = L-glutamyl-[protein] + methanol + H(+). It carries out the reaction L-glutaminyl-[protein] + H2O = L-glutamyl-[protein] + NH4(+). In terms of biological role, involved in chemotaxis. Part of a chemotaxis signal transduction system that modulates chemotaxis in response to various stimuli. Catalyzes the demethylation of specific methylglutamate residues introduced into the chemoreceptors (methyl-accepting chemotaxis proteins or MCP) by CheR. Also mediates the irreversible deamidation of specific glutamine residues to glutamic acid. This Albidiferax ferrireducens (strain ATCC BAA-621 / DSM 15236 / T118) (Rhodoferax ferrireducens) protein is Protein-glutamate methylesterase/protein-glutamine glutaminase 1.